Consider the following 309-residue polypeptide: L-aminoadipate-semialdehyde dehydrogenase-phosphopantetheinyl transferase (309 aa).

CoA-binding positions include Arg-47, 86–91 (RTSKGK), and 108–111 (NISH). Mg(2+) contacts are provided by Asp-129 and Glu-181. 181–185 (ESFIK) serves as a coordination point for CoA.

It belongs to the P-Pant transferase superfamily. AcpS family. As to quaternary structure, monomer. The cofactor is Mg(2+).

It is found in the cytoplasm. It localises to the cytosol. It catalyses the reaction apo-[ACP] + CoA = holo-[ACP] + adenosine 3',5'-bisphosphate + H(+). It carries out the reaction apo-[ACP] + acetyl-CoA = acetyl-[ACP] + adenosine 3',5'-bisphosphate + H(+). In terms of biological role, catalyzes the post-translational modification of target proteins by phosphopantetheine. Can transfer the 4'-phosphopantetheine moiety from coenzyme A, regardless of whether the CoA is presented in the free thiol form or as an acetyl thioester, to a serine residue of a broad range of acceptors including the acyl carrier domain of FASN. The sequence is that of L-aminoadipate-semialdehyde dehydrogenase-phosphopantetheinyl transferase (Aasdhppt) from Mus musculus (Mouse).